A 316-amino-acid chain; its full sequence is 4-hydroxy-3-methylbut-2-enyl diphosphate reductase (316 aa).

Cys12 contributes to the [4Fe-4S] cluster binding site. (2E)-4-hydroxy-3-methylbut-2-enyl diphosphate-binding residues include His41 and His74. Positions 41 and 74 each coordinate dimethylallyl diphosphate. Isopentenyl diphosphate contacts are provided by His41 and His74. Cys96 contacts [4Fe-4S] cluster. Residue His124 participates in (2E)-4-hydroxy-3-methylbut-2-enyl diphosphate binding. Dimethylallyl diphosphate is bound at residue His124. Isopentenyl diphosphate is bound at residue His124. The active-site Proton donor is Glu126. Thr167 is a (2E)-4-hydroxy-3-methylbut-2-enyl diphosphate binding site. Residue Cys197 coordinates [4Fe-4S] cluster. 4 residues coordinate (2E)-4-hydroxy-3-methylbut-2-enyl diphosphate: Ser225, Ser226, Asn227, and Ser269. Residues Ser225, Ser226, Asn227, and Ser269 each contribute to the dimethylallyl diphosphate site. The isopentenyl diphosphate site is built by Ser225, Ser226, Asn227, and Ser269.

The protein belongs to the IspH family. As to quaternary structure, homodimer. [4Fe-4S] cluster is required as a cofactor.

The catalysed reaction is isopentenyl diphosphate + 2 oxidized [2Fe-2S]-[ferredoxin] + H2O = (2E)-4-hydroxy-3-methylbut-2-enyl diphosphate + 2 reduced [2Fe-2S]-[ferredoxin] + 2 H(+). It catalyses the reaction dimethylallyl diphosphate + 2 oxidized [2Fe-2S]-[ferredoxin] + H2O = (2E)-4-hydroxy-3-methylbut-2-enyl diphosphate + 2 reduced [2Fe-2S]-[ferredoxin] + 2 H(+). Its pathway is isoprenoid biosynthesis; dimethylallyl diphosphate biosynthesis; dimethylallyl diphosphate from (2E)-4-hydroxy-3-methylbutenyl diphosphate: step 1/1. It participates in isoprenoid biosynthesis; isopentenyl diphosphate biosynthesis via DXP pathway; isopentenyl diphosphate from 1-deoxy-D-xylulose 5-phosphate: step 6/6. In terms of biological role, catalyzes the conversion of 1-hydroxy-2-methyl-2-(E)-butenyl 4-diphosphate (HMBPP) into a mixture of isopentenyl diphosphate (IPP) and dimethylallyl diphosphate (DMAPP). Acts in the terminal step of the DOXP/MEP pathway for isoprenoid precursor biosynthesis. The chain is 4-hydroxy-3-methylbut-2-enyl diphosphate reductase from Salmonella paratyphi B (strain ATCC BAA-1250 / SPB7).